Here is a 246-residue protein sequence, read N- to C-terminus: Probable transcriptional regulatory protein WRi_002620 (246 aa).

Residues M1–S22 are disordered.

It belongs to the TACO1 family.

Its subcellular location is the cytoplasm. The sequence is that of Probable transcriptional regulatory protein WRi_002620 from Wolbachia sp. subsp. Drosophila simulans (strain wRi).